Reading from the N-terminus, the 427-residue chain is Histidine--tRNA ligase (427 aa).

Belongs to the class-II aminoacyl-tRNA synthetase family. As to quaternary structure, homodimer.

It localises to the cytoplasm. It carries out the reaction tRNA(His) + L-histidine + ATP = L-histidyl-tRNA(His) + AMP + diphosphate + H(+). This chain is Histidine--tRNA ligase, found in Lacticaseibacillus casei (strain BL23) (Lactobacillus casei).